Consider the following 320-residue polypeptide: Malate dehydrogenase (320 aa).

NAD(+) contacts are provided by residues 10 to 15 (GSGMIG) and Asp34. Residues Arg83 and Arg89 each coordinate substrate. NAD(+) is bound by residues Asn96 and 119–121 (ITN). 2 residues coordinate substrate: Asn121 and Arg152. His176 functions as the Proton acceptor in the catalytic mechanism.

It belongs to the LDH/MDH superfamily. MDH type 3 family.

The enzyme catalyses (S)-malate + NAD(+) = oxaloacetate + NADH + H(+). Functionally, catalyzes the reversible oxidation of malate to oxaloacetate. In Brucella melitensis biotype 2 (strain ATCC 23457), this protein is Malate dehydrogenase.